An 804-amino-acid polypeptide reads, in one-letter code: Probable replication endonuclease from prophage-like region (804 aa).

Residues tyrosine 498 and tyrosine 502 each act as O-(5'-phospho-DNA)-tyrosine intermediate in the active site.

This sequence belongs to the phage GPA family.

Possible endonuclease which induces a single-strand cut and initiates DNA replication. This Shigella boydii serotype 4 (strain Sb227) protein is Probable replication endonuclease from prophage-like region.